Reading from the N-terminus, the 548-residue chain is WAP, Kazal, immunoglobulin, Kunitz and NTR domain-containing protein 1 (548 aa).

The first 19 residues, 1–19, serve as a signal peptide directing secretion; that stretch reads MPALRPLLPLLLLLRLTSG. The WAP domain occupies 26-79; the sequence is LGSHPGVCPNQLSPNLWVDAQSTCERECSRDQDCAAAEKCCINVCGLHSCVAAR. Cystine bridges form between Cys-33/Cys-66, Cys-49/Cys-70, Cys-53/Cys-65, Cys-59/Cys-75, Cys-116/Cys-146, Cys-120/Cys-139, and Cys-128/Cys-157. In terms of domain architecture, Kazal-like spans 108-159; sequence WDGQPVCRCRDRCEKEPSFTCASDGLTYYNRCYMDAEACLRGLHLHIVPCKH. Residues 164-184 are disordered; it reads PPSSPGPPETTARPTPGAAPV. In terms of domain architecture, Ig-like C2-type spans 186–279; it reads PALYSSPSPQ…GLLRADFPLS (94 aa). 10 disulfides stabilise this stretch: Cys-207–Cys-263, Cys-299–Cys-351, Cys-306–Cys-334, Cys-326–Cys-347, Cys-359–Cys-409, Cys-368–Cys-392, Cys-384–Cys-405, Cys-417–Cys-489, Cys-420–Cys-491, and Cys-431–Cys-540. BPTI/Kunitz inhibitor domains lie at 299–351 and 359–409; these read CLPD…QQAC and CVLP…EDAC. The NTR domain occupies 409–540; the sequence is CPVPRTPPCR…ILELLEKQAC (132 aa). N-linked (GlcNAc...) asparagine glycosylation is present at Asn-493.

Belongs to the WFIKKN family. Expressed in pancreas, kidney, liver, placenta, and lung.

It localises to the secreted. In terms of biological role, protease-inhibitor that contains multiple distinct protease inhibitor domains. Probably has serine protease- and metalloprotease-inhibitor activity. This Homo sapiens (Human) protein is WAP, Kazal, immunoglobulin, Kunitz and NTR domain-containing protein 1 (WFIKKN1).